Reading from the N-terminus, the 323-residue chain is ADP/ATP translocase 4 (323 aa).

Residues 1-23 are Mitochondrial intermembrane-facing; sequence MQREPPKRKQEKKVEKGLFDATS. Residues 22-114 form a Solcar 1 repeat; sequence TSFGKDLLAG…FAFKDKYKQL (93 aa). The chain crosses the membrane as a helical span at residues 24–53; sequence FGKDLLAGGVAAAVSKTTVAPIERVKLLLQ. At 54-90 the chain is on the mitochondrial matrix side; it reads VQASSKQISPEAQYKGIVDCLVRIPREQGFLSYWRGN. Residues 91–115 traverse the membrane as a helical segment; that stretch reads LANVIRYFPTQALNFAFKDKYKQLF. Positions 96 and 108 each coordinate ADP. Residues 116–125 lie on the Mitochondrial intermembrane side of the membrane; that stretch reads MSGVNKEKQF. A helical transmembrane segment spans residues 126–146; sequence WRWFLANLASGGAAGATSLCV. Solcar repeat units follow at residues 127-217 and 224-311; these read RWFL…VKGL and THFL…IKDL. At 147–194 the chain is on the mitochondrial matrix side; that stretch reads VYPLDFARTRLGADIGKGPEERQFKGLGDCIMKIAKSDGIVGLYQGFG. A helical transmembrane segment spans residues 195 to 215; it reads VSVQGIIVYRASYFGAYDTVK. Over 216–226 the chain is Mitochondrial intermembrane; it reads GLLPKPKETHF. The helical transmembrane segment at 227–247 threads the bilayer; the sequence is LVSFFIAQVVTTCSGILSYPF. Over 248–287 the chain is Mitochondrial matrix; the sequence is DTVRRRMMMQSGEAERQYKGTLDCFMKIYQQEGIGAFFRG. ADP is bound at residue arginine 251. Residues 251–256 are important for transport activity; it reads RRRMMM. The Nucleotide carrier signature motif motif lies at 251–256; sequence RRRMMM. The chain crosses the membrane as a helical span at residues 288-305; it reads AFSNILRGTGGALVLVLY. The Mitochondrial intermembrane segment spans residues 306-323; sequence DKIKDLLNIDIGGSSSGD.

It belongs to the mitochondrial carrier (TC 2.A.29) family. In terms of assembly, monomer.

Its subcellular location is the mitochondrion inner membrane. The protein localises to the membrane. It localises to the cell projection. It is found in the cilium. The protein resides in the flagellum membrane. The catalysed reaction is ADP(in) + ATP(out) = ADP(out) + ATP(in). It catalyses the reaction dATP(out) + ADP(in) = dATP(in) + ADP(out). The enzyme catalyses dADP(in) + ADP(out) = dADP(out) + ADP(in). It carries out the reaction H(+)(in) = H(+)(out). Its activity is regulated as follows. The matrix-open state (m-state) is inhibited by the membrane-permeable bongkrekic acid (BKA). The cytoplasmic-open state (c-state) is inhibited by the membrane-impermeable toxic inhibitor carboxyatractyloside (CATR). Proton transporter activity is inhibited by ADP:ATP antiporter activity. Its function is as follows. ADP:ATP antiporter that mediates import of ADP into the mitochondrial matrix for ATP synthesis, and export of ATP out to fuel the cell. Cycles between the cytoplasmic-open state (c-state) and the matrix-open state (m-state): operates by the alternating access mechanism with a single substrate-binding site intermittently exposed to either the cytosolic (c-state) or matrix (m-state) side of the inner mitochondrial membrane. Specifically required during spermatogenesis, probably to mediate ADP:ATP exchange in spermatocytes. Large ATP supplies from mitochondria may be critical for normal progression of spermatogenesis during early stages of meiotic prophase I, including DNA double-strand break repair and chromosomal synapsis. In addition to its ADP:ATP antiporter activity, also involved in mitochondrial uncoupling and mitochondrial permeability transition pore (mPTP) activity. Plays a role in mitochondrial uncoupling by acting as a proton transporter: proton transport uncouples the proton flows via the electron transport chain and ATP synthase to reduce the efficiency of ATP production and cause mitochondrial thermogenesis. Proton transporter activity is inhibited by ADP:ATP antiporter activity, suggesting that SLC25A31/ANT4 acts as a master regulator of mitochondrial energy output by maintaining a delicate balance between ATP production (ADP:ATP antiporter activity) and thermogenesis (proton transporter activity). Proton transporter activity requires free fatty acids as cofactor, but does not transport it. Among nucleotides, may also exchange ADP for dATP and dADP. Also plays a key role in mPTP opening, a non-specific pore that enables free passage of the mitochondrial membranes to solutes of up to 1.5 kDa, and which contributes to cell death. It is however unclear if SLC25A31/ANT4 constitutes a pore-forming component of mPTP or regulates it. In Bos taurus (Bovine), this protein is ADP/ATP translocase 4.